The sequence spans 1196 residues: DNA-directed RNA polymerase I subunit RPA2 (1196 aa).

The C4-type zinc finger occupies 1097-1124 (CRECGSILTTQSSVPKIGSMVTIRCRRC).

The protein belongs to the RNA polymerase beta chain family. As to quaternary structure, component of the RNA polymerase I (Pol I) complex consisting of 14 subunits.

Its subcellular location is the nucleus. It is found in the nucleolus. It catalyses the reaction RNA(n) + a ribonucleoside 5'-triphosphate = RNA(n+1) + diphosphate. In terms of biological role, DNA-dependent RNA polymerase catalyzes the transcription of DNA into RNA using the four ribonucleoside triphosphates as substrates. Second largest core component of RNA polymerase I which synthesizes ribosomal RNA precursors. Proposed to contribute to the polymerase catalytic activity and forms the polymerase active center together with the largest subunit. Pol I is composed of mobile elements and RPA2 is part of the core element with the central large cleft and probably a clamp element that moves to open and close the cleft. This is DNA-directed RNA polymerase I subunit RPA2 (RPA2) from Eremothecium gossypii (strain ATCC 10895 / CBS 109.51 / FGSC 9923 / NRRL Y-1056) (Yeast).